Consider the following 690-residue polypeptide: Elongation factor G (690 aa).

The region spanning 8 to 283 (SKCRNIGIMA…AVVDFLPAPN (276 aa)) is the tr-type G domain. GTP-binding positions include 17-24 (AHIDAGKT), 81-85 (DTPGH), and 135-138 (NKMD).

It belongs to the TRAFAC class translation factor GTPase superfamily. Classic translation factor GTPase family. EF-G/EF-2 subfamily.

Its subcellular location is the cytoplasm. Catalyzes the GTP-dependent ribosomal translocation step during translation elongation. During this step, the ribosome changes from the pre-translocational (PRE) to the post-translocational (POST) state as the newly formed A-site-bound peptidyl-tRNA and P-site-bound deacylated tRNA move to the P and E sites, respectively. Catalyzes the coordinated movement of the two tRNA molecules, the mRNA and conformational changes in the ribosome. The polypeptide is Elongation factor G (Ehrlichia canis (strain Jake)).